Consider the following 277-residue polypeptide: NADPH-dependent 7-cyano-7-deazaguanine reductase (277 aa).

83–85 (VES) serves as a coordination point for substrate. 85–86 (SK) serves as a coordination point for NADPH. Cys184 acts as the Thioimide intermediate in catalysis. The Proton donor role is filled by Asp191. 223-224 (HE) serves as a coordination point for substrate. NADPH is bound at residue 252 to 253 (RG).

Belongs to the GTP cyclohydrolase I family. QueF type 2 subfamily. In terms of assembly, homodimer.

The protein localises to the cytoplasm. The enzyme catalyses 7-aminomethyl-7-carbaguanine + 2 NADP(+) = 7-cyano-7-deazaguanine + 2 NADPH + 3 H(+). The protein operates within tRNA modification; tRNA-queuosine biosynthesis. Functionally, catalyzes the NADPH-dependent reduction of 7-cyano-7-deazaguanine (preQ0) to 7-aminomethyl-7-deazaguanine (preQ1). The protein is NADPH-dependent 7-cyano-7-deazaguanine reductase of Ralstonia nicotianae (strain ATCC BAA-1114 / GMI1000) (Ralstonia solanacearum).